The chain runs to 623 residues: Bifunctional methionine biosynthesis protein MetXA/MetW (623 aa).

The span at 1 to 17 shows a compositional bias: polar residues; the sequence is MTSGRSTRVTMFESQAS. Residues 1–30 form a disordered region; that stretch reads MTSGRSTRVTMFESQASMGEPSNEDLSSTD. An AB hydrolase-1 domain is found at 77–385; it reads NAVLVCHAVS…TTNAGHDAFL (309 aa). Ser-183 (nucleophile) is an active-site residue. Arg-253 provides a ligand contact to substrate. Catalysis depends on residues Asp-348 and His-381. Asp-382 provides a ligand contact to substrate. Positions 417–619 are metW; the sequence is NVDEESILEI…NADTAVIAFH (203 aa).

It in the N-terminal section; belongs to the AB hydrolase superfamily. MetX family. In the C-terminal section; belongs to the MetW family. Homodimer.

It localises to the cytoplasm. The catalysed reaction is L-homoserine + acetyl-CoA = O-acetyl-L-homoserine + CoA. The protein operates within amino-acid biosynthesis; L-methionine biosynthesis via de novo pathway; O-acetyl-L-homoserine from L-homoserine: step 1/1. Functionally, transfers an acetyl group from acetyl-CoA to L-homoserine, forming acetyl-L-homoserine. This Rhodopirellula baltica (strain DSM 10527 / NCIMB 13988 / SH1) protein is Bifunctional methionine biosynthesis protein MetXA/MetW.